We begin with the raw amino-acid sequence, 165 residues long: Deoxyuridine 5'-triphosphate nucleotidohydrolase (165 aa).

Belongs to the dUTPase family. As to quaternary structure, homotrimer. It depends on Mg(2+) as a cofactor.

Its subcellular location is the host cytoplasm. It is found in the virion. The catalysed reaction is dUTP + H2O = dUMP + diphosphate + H(+). Functionally, the viral dUTPase may play a role in lowering the dUTP concentration in natural infections to minimize misincorporation of deoxyuridine into the viral DNA and ensure the fidelity of genome replication. In Ornithodoros (relapsing fever ticks), this protein is Deoxyuridine 5'-triphosphate nucleotidohydrolase.